We begin with the raw amino-acid sequence, 244 residues long: 7-cyano-7-deazaguanine synthase (244 aa).

17 to 27 (FSGGQDSTTCL) is an ATP binding site. Zn(2+) contacts are provided by C205, C220, C223, and C226.

It belongs to the QueC family. Requires Zn(2+) as cofactor.

It catalyses the reaction 7-carboxy-7-deazaguanine + NH4(+) + ATP = 7-cyano-7-deazaguanine + ADP + phosphate + H2O + H(+). Its pathway is purine metabolism; 7-cyano-7-deazaguanine biosynthesis. In terms of biological role, catalyzes the ATP-dependent conversion of 7-carboxy-7-deazaguanine (CDG) to 7-cyano-7-deazaguanine (preQ(0)). The sequence is that of 7-cyano-7-deazaguanine synthase from Bordetella parapertussis (strain 12822 / ATCC BAA-587 / NCTC 13253).